Consider the following 348-residue polypeptide: Protein pelota homolog (348 aa).

It belongs to the eukaryotic release factor 1 family. Pelota subfamily. As to quaternary structure, monomer. Requires a divalent metal cation as cofactor.

Its subcellular location is the cytoplasm. May function in recognizing stalled ribosomes, interact with stem-loop structures in stalled mRNA molecules, and effect endonucleolytic cleavage of the mRNA. May play a role in the release non-functional ribosomes and degradation of damaged mRNAs. Has endoribonuclease activity. The polypeptide is Protein pelota homolog (Methanococcus maripaludis (strain C7 / ATCC BAA-1331)).